The sequence spans 248 residues: Ureidoacrylate amidohydrolase RutB (248 aa).

The active-site Proton acceptor is Asp41. Residue Lys150 is part of the active site. Cys183 (nucleophile) is an active-site residue.

It belongs to the isochorismatase family. RutB subfamily.

The catalysed reaction is (Z)-3-ureidoacrylate + H2O + H(+) = (Z)-3-aminoacrylate + NH4(+) + CO2. It catalyses the reaction (Z)-3-ureidoacrylate + H2O = (Z)-3-aminoacrylate + carbamate + H(+). It carries out the reaction (Z)-2-methylureidoacrylate + H2O + H(+) = (Z)-2-methylaminoacrylate + NH4(+) + CO2. In terms of biological role, hydrolyzes ureidoacrylate to form aminoacrylate and carbamate. The carbamate hydrolyzes spontaneously, thereby releasing one of the nitrogen atoms of the pyrimidine ring as ammonia and one of its carbon atoms as CO2. This is Ureidoacrylate amidohydrolase RutB from Methylorubrum extorquens (strain DSM 6343 / CIP 106787 / DM4) (Methylobacterium extorquens).